The following is a 648-amino-acid chain: Nucleoside triphosphatase I (648 aa).

The Helicase ATP-binding domain maps to 48-213; it reads FIGLKNLNSM…NNLIGLLRPN (166 aa). 61 to 68 provides a ligand contact to ATP; the sequence is WDTGTGKT. Residues 151–154 carry the DEXH box motif; the sequence is DEVH. The Helicase C-terminal domain maps to 379-542; that stretch reads YIEACRIILN…KINVVFDLLK (164 aa). A binding to the cap-specific mRNA (nucleoside-2'-O-)-methyltransferase region spans residues 468–534; sequence DIIILDMPWN…DIIKNKQGKI (67 aa).

This sequence belongs to the helicase family. NPH I subfamily. Monomer. Interacts (via C-terminus) with RAP94 (via N-terminus). Interacts with the cap-specific mRNA (nucleoside-2'-O-)-methyltransferase.

The protein resides in the virion. It catalyses the reaction a ribonucleoside 5'-triphosphate + H2O = a ribonucleoside 5'-diphosphate + phosphate + H(+). Its function is as follows. DNA-dependent ATPase required for providing the needed energy to achieve the termination of early transcripts. Acts in concert with the RAP94 subunit of the virion RNA polymerase and the capping enzyme/VTF to catalyze release of UUUUUNU-containing nascent RNA from the elongation complex. NPH-I must bind ssDNA in order to exhibit ATPase activity. This Choristoneura fumiferana (Spruce budworm moth) protein is Nucleoside triphosphatase I (NPH1).